Here is a 318-residue protein sequence, read N- to C-terminus: Death effector domain-containing protein (318 aa).

A DED domain is found at 25–103; that stretch reads SLHRMFDIVG…RHDLLPYVTL (79 aa). The disordered stretch occupies residues 128–191; it reads PRALSDPEPR…SVTPDPKEKQ (64 aa).

As to quaternary structure, interacts with CASP8, CASP10, KRT8, KRT18, CASP3 and FADD. Homodimerizes and heterodimerizes with DEDD2. Exists predominantly in a mono- or diubiquitinated form. As to expression, widely expressed with highest levels in testis. Within the testis, highly expressed in germ cells but not expressed in Sertoli cells.

Its subcellular location is the cytoplasm. It localises to the nucleus. The protein localises to the nucleolus. In terms of biological role, a scaffold protein that directs CASP3 to certain substrates and facilitates their ordered degradation during apoptosis. May also play a role in mediating CASP3 cleavage of KRT18. Regulates degradation of intermediate filaments during apoptosis. May play a role in the general transcription machinery in the nucleus and might be an important regulator of the activity of GTF3C3. Inhibits DNA transcription in vitro. In Rattus norvegicus (Rat), this protein is Death effector domain-containing protein (Dedd).